The following is a 203-amino-acid chain: RNA annealing protein YRA2 (203 aa).

The residue at position 1 (Met1) is an N-acetylmethionine. 2 disordered regions span residues 1-60 (MDKA…REEP) and 137-203 (QPQR…YMKG). Residues 11 to 20 (NSHTDSSSNH) are compositionally biased toward polar residues. Residues 47–60 (SRSKDRLYREREEP) are compositionally biased toward basic and acidic residues. Positions 64-138 (KRIRISKIPL…AKIEVEIYQP (75 aa)) constitute an RRM domain. 2 stretches are compositionally biased toward basic residues: residues 139-153 (QRKHSRMNAHNRRKQ) and 161-180 (GRPGSHYRQKPNRVSKKNKG).

Belongs to the YRA1 family. Associates with mRNPs. Interacts with YRA1.

The protein resides in the nucleus. In terms of biological role, involved in export of poly(A) mRNAs from the nucleus. Recruited to the coding sequences as well as poly-A sites of active genes. The chain is RNA annealing protein YRA2 (YRA2) from Saccharomyces cerevisiae (strain JAY291) (Baker's yeast).